Consider the following 517-residue polypeptide: Mucin-like protein 3 (517 aa).

The N-terminal stretch at Met-1–Ala-29 is a signal peptide. The Extracellular segment spans residues Thr-30–Ala-448. The interval Ser-67–Leu-341 is disordered. The span at Gln-83–Ser-93 shows a compositional bias: basic residues. A glycan (N-linked (GlcNAc...) asparagine) is linked at Asn-88. Positions Thr-105–Glu-116 are enriched in basic and acidic residues. An N-linked (GlcNAc...) asparagine glycan is attached at Asn-124. Residues Arg-169–Thr-179 are compositionally biased toward polar residues. Residues Arg-180 to Glu-190 are compositionally biased toward basic and acidic residues. Positions Ser-194–Ser-213 are enriched in low complexity. 3 stretches are compositionally biased toward polar residues: residues Gly-214–Phe-225, Ala-232–Pro-243, and Thr-263–Ala-283. Residues Thr-305 to Lys-317 are compositionally biased toward basic and acidic residues. Residue Asn-338 is glycosylated (N-linked (GlcNAc...) asparagine). The helical transmembrane segment at Ile-449–Leu-469 threads the bilayer. The Cytoplasmic portion of the chain corresponds to Val-470 to Arg-517.

In terms of tissue distribution, detected in lung, esophagus, stomach, rectum, skin, cervix, testis, kidney, uterus and small intestine. Expressed in pancreas (at protein level).

The protein localises to the cell membrane. It is found in the cytoplasm. Functionally, may modulate NF-kappaB signaling and play a role in cell growth. This is Mucin-like protein 3 from Homo sapiens (Human).